A 139-amino-acid polypeptide reads, in one-letter code: AP-4 complex subunit sigma (139 aa).

The protein belongs to the adaptor complexes small subunit family. In terms of assembly, may be part of the adaptor protein complex 4 (AP-4), a heterotetramer composed of two large adaptins (epsilon-type subunitand beta-type subunit), a medium adaptin (mu-type subunit) and a small adaptin (sigma-type).

It localises to the golgi apparatus. Its subcellular location is the trans-Golgi network membrane. In terms of biological role, probable component of an adaptor protein complex. Adaptor protein complexes are vesicle coat components involved both in vesicle formation and cargo selection. They control the vesicular transport of proteins in different trafficking pathways. This chain is AP-4 complex subunit sigma, found in Dictyostelium discoideum (Social amoeba).